We begin with the raw amino-acid sequence, 250 residues long: 5-oxoprolinase subunit A (250 aa).

This sequence belongs to the LamB/PxpA family. Forms a complex composed of PxpA, PxpB and PxpC.

The enzyme catalyses 5-oxo-L-proline + ATP + 2 H2O = L-glutamate + ADP + phosphate + H(+). Its function is as follows. Catalyzes the cleavage of 5-oxoproline to form L-glutamate coupled to the hydrolysis of ATP to ADP and inorganic phosphate. This chain is 5-oxoprolinase subunit A, found in Pseudomonas fluorescens (strain ATCC BAA-477 / NRRL B-23932 / Pf-5).